Here is a 602-residue protein sequence, read N- to C-terminus: Translation initiation factor IF-2 (602 aa).

The 170-residue stretch at 112 to 281 (KRAPIITIMG…LLLCEVLDLK (170 aa)) folds into the tr-type G domain. Residues 121-128 (GHVDHGKT) form a G1 region. Residue 121–128 (GHVDHGKT) participates in GTP binding. Residues 146–150 (GITQH) are G2. Residues 167–170 (DTPG) form a G3 region. Residues 167–171 (DTPGH) and 221–224 (NKMD) contribute to the GTP site. Residues 221-224 (NKMD) are G4. The segment at 257–259 (SAL) is G5.

The protein belongs to the TRAFAC class translation factor GTPase superfamily. Classic translation factor GTPase family. IF-2 subfamily.

It is found in the cytoplasm. Functionally, one of the essential components for the initiation of protein synthesis. Protects formylmethionyl-tRNA from spontaneous hydrolysis and promotes its binding to the 30S ribosomal subunits. Also involved in the hydrolysis of GTP during the formation of the 70S ribosomal complex. The sequence is that of Translation initiation factor IF-2 from Mycoplasmopsis synoviae (strain 53) (Mycoplasma synoviae).